A 677-amino-acid chain; its full sequence is MATDPRTMLVTCALPYANGSIHLGHMLEHIQADIWVRYQRMRGHQVHFVCADDAHGTPIMLKAQQLGITPEEMIAAVSKEHQADFAGFNISFDNYHSTHSDENRELAELIYGRLQAGGKIKSRTISQLFDPEKSMFLPDRFVKGTCPKCKSPEQYGDNCDSCGATYSPTELIDPKSAVSGATPVMKDSEHFFFDLPQFEKWLAEWVRGSGAIQEEMANKMQEWFESGLQQWDITRDAPYFGFEIPGAPGKYFYVWLDAPIGYMASFKNLCNKRRDIDFDSYWKADSEAELYHFIGKDIAYFHCLFWPSMLEGAGFRKPTKVNVHGYVTVNGAKMSKSKGTFIKASTYLNHLDPECLRYYYAAKLNSRIDDLDLNLDDFVARVNADVVNKLVNLASRNAGFIAKRFDGKLAATCAEPELYAEFANSRTAIAEAYESREFSRAIREIMALADKANRYVDDKAPWVIAKQEGADAELQAVCSVGINLFRVLMAYLKPVMPLLAERAEAFLAETLSWDGIEMPLVDHTVAPFKALFSRIEPAKIEAMIDASKEDLAKEQAPKASGPLVDDPISETISYDDFAKIDLRVALIKKAEAVPEADKLLKLQLDIGGETRQVFAGIKSAYNPEDLEGKLTVMVANLAPRKMRFGMSEGMVLAAGPGGKDLWILEPQEGAKPGMRVK.

The 'HIGH' region signature appears at 15 to 25 (PYANGSIHLGH). Zn(2+) is bound by residues cysteine 146, cysteine 149, cysteine 159, and cysteine 162. The short motif at 333–337 (KMSKS) is the 'KMSKS' region element. Lysine 336 provides a ligand contact to ATP. The region spanning 576–677 (DFAKIDLRVA…EGAKPGMRVK (102 aa)) is the tRNA-binding domain.

This sequence belongs to the class-I aminoacyl-tRNA synthetase family. MetG type 1 subfamily. In terms of assembly, homodimer. It depends on Zn(2+) as a cofactor.

The protein localises to the cytoplasm. The catalysed reaction is tRNA(Met) + L-methionine + ATP = L-methionyl-tRNA(Met) + AMP + diphosphate. In terms of biological role, is required not only for elongation of protein synthesis but also for the initiation of all mRNA translation through initiator tRNA(fMet) aminoacylation. This Aeromonas hydrophila subsp. hydrophila (strain ATCC 7966 / DSM 30187 / BCRC 13018 / CCUG 14551 / JCM 1027 / KCTC 2358 / NCIMB 9240 / NCTC 8049) protein is Methionine--tRNA ligase.